The sequence spans 84 residues: Sulfur carrier protein TusA (84 aa).

The Cysteine persulfide intermediate role is filled by Cys-21.

Belongs to the sulfur carrier protein TusA family.

Its subcellular location is the cytoplasm. In terms of biological role, sulfur carrier protein which probably makes part of a sulfur-relay system. In Pseudomonas savastanoi pv. phaseolicola (strain 1448A / Race 6) (Pseudomonas syringae pv. phaseolicola (strain 1448A / Race 6)), this protein is Sulfur carrier protein TusA.